The sequence spans 162 residues: 3-dehydroquinate dehydratase (162 aa).

Catalysis depends on tyrosine 22, which acts as the Proton acceptor. Substrate-binding residues include asparagine 73, histidine 79, and aspartate 86. Histidine 99 acts as the Proton donor in catalysis. Substrate is bound by residues 100 to 101 (LS) and arginine 110.

The protein belongs to the type-II 3-dehydroquinase family. As to quaternary structure, homododecamer.

The catalysed reaction is 3-dehydroquinate = 3-dehydroshikimate + H2O. Its pathway is metabolic intermediate biosynthesis; chorismate biosynthesis; chorismate from D-erythrose 4-phosphate and phosphoenolpyruvate: step 3/7. Catalyzes a trans-dehydration via an enolate intermediate. The chain is 3-dehydroquinate dehydratase from Sulfurovum sp. (strain NBC37-1).